The following is a 153-amino-acid chain: SsrA-binding protein (153 aa).

Positions 132–142 (ALKRKEAEREA) are enriched in basic and acidic residues. The disordered stretch occupies residues 132–153 (ALKRKEAEREAQSAMKRYAKGY).

Belongs to the SmpB family.

Its subcellular location is the cytoplasm. Required for rescue of stalled ribosomes mediated by trans-translation. Binds to transfer-messenger RNA (tmRNA), required for stable association of tmRNA with ribosomes. tmRNA and SmpB together mimic tRNA shape, replacing the anticodon stem-loop with SmpB. tmRNA is encoded by the ssrA gene; the 2 termini fold to resemble tRNA(Ala) and it encodes a 'tag peptide', a short internal open reading frame. During trans-translation Ala-aminoacylated tmRNA acts like a tRNA, entering the A-site of stalled ribosomes, displacing the stalled mRNA. The ribosome then switches to translate the ORF on the tmRNA; the nascent peptide is terminated with the 'tag peptide' encoded by the tmRNA and targeted for degradation. The ribosome is freed to recommence translation, which seems to be the essential function of trans-translation. The chain is SsrA-binding protein from Campylobacter hominis (strain ATCC BAA-381 / DSM 21671 / CCUG 45161 / LMG 19568 / NCTC 13146 / CH001A).